We begin with the raw amino-acid sequence, 252 residues long: Triosephosphate isomerase (252 aa).

A substrate-binding site is contributed by 9–11; the sequence is NWK. His-96 (electrophile) is an active-site residue. The active-site Proton acceptor is Glu-168. Residues Gly-174, Ser-214, and 235–236 each bind substrate; that span reads GG.

It belongs to the triosephosphate isomerase family. Homodimer.

The protein resides in the cytoplasm. The enzyme catalyses D-glyceraldehyde 3-phosphate = dihydroxyacetone phosphate. The protein operates within carbohydrate biosynthesis; gluconeogenesis. Its pathway is carbohydrate degradation; glycolysis; D-glyceraldehyde 3-phosphate from glycerone phosphate: step 1/1. Its function is as follows. Involved in the gluconeogenesis. Catalyzes stereospecifically the conversion of dihydroxyacetone phosphate (DHAP) to D-glyceraldehyde-3-phosphate (G3P). The chain is Triosephosphate isomerase from Chloroherpeton thalassium (strain ATCC 35110 / GB-78).